We begin with the raw amino-acid sequence, 430 residues long: UDP-glucuronate 4-epimerase 3 (430 aa).

Helical transmembrane passes span 29–49 (SVAK…IFFY) and 90–110 (GFSV…SAAL). Residue 92 to 123 (SVLVTGAAGFVGTHVSAALKRRGDGVLGLDNF) participates in NAD(+) binding. The Proton acceptor role is filled by Tyr242.

It belongs to the NAD(P)-dependent epimerase/dehydratase family. As to quaternary structure, homodimer. As to expression, in roots, leaves, siliques, flowers, pollen and stems.

Its subcellular location is the golgi apparatus. The protein localises to the golgi stack membrane. It carries out the reaction UDP-alpha-D-glucuronate = UDP-alpha-D-galacturonate. Functionally, involved in the synthesis of the negatively charged monosaccharide that forms the backbone of pectic cell wall components. This is UDP-glucuronate 4-epimerase 3 (GAE3) from Arabidopsis thaliana (Mouse-ear cress).